The following is a 484-amino-acid chain: Gasdermin-D (484 aa).

Tyr-37 carries the phosphotyrosine modification. S-(2-succinyl)cysteine is present on Cys-56. 2 beta stranded membrane-spanning segments follow: residues 91 to 97 and 103 to 108; these read QGSVELA and KIAGGA. Tyr-158 is subject to Phosphotyrosine. Transmembrane regions (beta stranded) follow at residues 180–186 and 191–197; these read GSGRFSL and CLQGEGQ. Ser-185 carries the post-translational modification Phosphoserine. S-(2-succinyl)cysteine is present on residues Cys-191 and Cys-268. The S-palmitoyl cysteine moiety is linked to residue Cys-191. A linker helix loop region spans residues 277-296; it reads VPAEGAFTEDFQGLRAEVET. At Cys-309 the chain carries S-(2-succinyl)cysteine. Ser-338 is a glycosylation site (O-linked (GlcNAc) serine). Cys-467 carries the post-translational modification S-(2-succinyl)cysteine.

It belongs to the gasdermin family. As to quaternary structure, homooligomer; homooligomeric ring-shaped pore complex containing 27-28 subunits when inserted in the membrane. Homooligomerization is promoted by the mTORC1 complex in macrophages. In response to a canonical inflammasome stimulus, such as nigericin, recruited to NLRP3 inflammasone with similar kinetics to that of uncleaved CASP1 precursor. Although this recruitment is also observed in the absence of PYCARD, it is more efficient in its presence. Cleavage at Asp-275 by CASP1 (mature and uncleaved precursor forms), CASP4, CASP5 or CASP8 relieves autoinhibition and is sufficient to initiate pyroptosis. Cleavage by CASP1 and CASP4 is not strictly dependent on the consensus cleavage site on GSDMD but depends on an exosite interface on CASP1 that recognizes and binds the Gasdermin-D, C-terminal (GSDMD-CT) part. Cleavage by CASP8 takes place following inactivation of MAP3K7/TAK1 by Yersinia toxin YopJ. Cleavage at Asp-87 by CASP3 or CASP7 inactivates the ability to mediate pyroptosis, but generates the Gasdermin-D, p13 chain, which translocates to the nucleus and acts as a transcription regulator. Cleavage by papain allergen generates the Gasdermin-D, p40 chain. In terms of processing, palmitoylated at Cys-191 by ZDHHC5 and ZDHHC9 in response to microbial infection and danger signals. Palmitoylation takes place before cleavage by caspases (CASP1, CASP4, CASP5 or CASP8) and is required for membrane translocation and pore formation. Depalmitoylated by LYPLA2. Post-translationally, succination of Cys-191 by the Krebs cycle intermediate fumarate, which leads to S-(2-succinyl)cysteine residues, inhibits processing by caspases, and ability to initiate pyroptosis. Succination modification is catalyzed by a non-enzymatic reaction caused by an accumulation of fumarate. Glycosylated: O-GlcNAcylation by OGT leads to reduced cleavage by CASP4 and decreased LPS-induced endothelial cell pyroptosis. In terms of processing, (Microbial infection) Cleaved and inactivated by Protease 3C from Human enterovirus 71 (EV71), preventing GSDMD-mediated pyroptosis. Post-translationally, (Microbial infection) Cleaved and inactivated by the 3C-like proteinase nsp5 from human coronavirus SARS-CoV-2, preventing GSDMD-mediated pyroptosis. (Microbial infection) Ubiquitinated by S.flexneri IpaH7.8, leading to its degradation by the proteasome. As to expression, expressed in the suprabasal cells of esophagus, as well as in the isthmus/neck, pit, and gland of the stomach, suggesting preferential expression in differentiating cells.

Its subcellular location is the cytoplasm. It localises to the cytosol. The protein localises to the inflammasome. It is found in the cell membrane. The protein resides in the secreted. Its subcellular location is the mitochondrion membrane. It localises to the nucleus. Its activity is regulated as follows. The full-length protein before cleavage is inactive: intramolecular interactions between N- and C-terminal domains mediate autoinhibition in the absence of activation signal. The intrinsic pyroptosis-inducing activity is carried by the released N-terminal moiety (Gasdermin-D, N-terminal) following cleavage by caspases CASP1, CASP4, CASP5 or CASP8. Cleavage at Asp-87 by CASP3 or CASP7 inactivates the ability to mediate pyroptosis. Homooligomerization and pore formation is specifically inhibited by VHH(GSDMD-1) and, to a lesser extent, VHH(GSDMD-2) nanobodies, protecting against excessive pyroptosis. Inhibited by small molecule NU6300, which covalently reacts with Cys-191, thereby preventing palmitoylation and pyroptosis. In terms of biological role, precursor of a pore-forming protein that plays a key role in host defense against pathogen infection and danger signals. This form constitutes the precursor of the pore-forming protein: upon cleavage, the released N-terminal moiety (Gasdermin-D, N-terminal) binds to membranes and forms pores, triggering pyroptosis. Its function is as follows. Promotes pyroptosis in response to microbial infection and danger signals. Produced by the cleavage of gasdermin-D by inflammatory caspases CASP1, CASP4 or CASP5 in response to canonical, as well as non-canonical (such as cytosolic LPS) inflammasome activators. After cleavage, moves to the plasma membrane where it strongly binds to inner leaflet lipids, including monophosphorylated phosphatidylinositols, such as phosphatidylinositol 4-phosphate, bisphosphorylated phosphatidylinositols, such as phosphatidylinositol (4,5)-bisphosphate, as well as phosphatidylinositol (3,4,5)-bisphosphate, and more weakly to phosphatidic acid and phosphatidylserine. Homooligomerizes within the membrane and forms pores of 10-15 nanometers (nm) of inner diameter, allowing the release of mature interleukin-1 (IL1B and IL18) and triggering pyroptosis. Gasdermin pores also allow the release of mature caspase-7 (CASP7). In some, but not all, cells types, pyroptosis is followed by pyroptotic cell death, which is caused by downstream activation of ninjurin-1 (NINJ1), which mediates membrane rupture (cytolysis). Also forms pores in the mitochondrial membrane, resulting in release of mitochondrial DNA (mtDNA) into the cytosol. Gasdermin-D, N-terminal released from pyroptotic cells into the extracellular milieu rapidly binds to and kills both Gram-negative and Gram-positive bacteria, without harming neighboring mammalian cells, as it does not disrupt the plasma membrane from the outside due to lipid-binding specificity. Under cell culture conditions, also active against intracellular bacteria, such as Listeria monocytogenes. Also active in response to MAP3K7/TAK1 inactivation by Yersinia toxin YopJ, which triggers cleavage by CASP8 and subsequent activation. Required for mucosal tissue defense against enteric pathogens. Activation of the non-canonical inflammasome in brain endothelial cells can lead to excessive pyroptosis, leading to blood-brain barrier breakdown. Strongly binds to bacterial and mitochondrial lipids, including cardiolipin. Does not bind to unphosphorylated phosphatidylinositol, phosphatidylethanolamine nor phosphatidylcholine. Transcription coactivator produced by the cleavage by CASP3 or CASP7 in the upper small intestine in response to dietary antigens. Required to maintain food tolerance in small intestine: translocates to the nucleus and acts as a coactivator for STAT1 to induce the transcription of CIITA and MHC class II molecules, which in turn induce type 1 regulatory T (Tr1) cells in upper small intestine. Functionally, produced by the cleavage by papain allergen. After cleavage, moves to the plasma membrane and homooligomerizes within the membrane and forms pores of 10-15 nanometers (nm) of inner diameter, allowing the specific release of mature interleukin-33 (IL33), promoting type 2 inflammatory immune response. This chain is Gasdermin-D, found in Homo sapiens (Human).